Consider the following 502-residue polypeptide: Protein YdgA (502 aa).

Residues 1–19 (MNKSLVAVGVIVALGVVWT) form the signal peptide.

This sequence to E.coli YihF and H.influenzae HI_1236. As to quaternary structure, homodimer.

It is found in the cell inner membrane. The chain is Protein YdgA (ydgA) from Escherichia coli (strain K12).